Here is a 712-residue protein sequence, read N- to C-terminus: Polyribonucleotide nucleotidyltransferase (712 aa).

Positions 487 and 493 each coordinate Mg(2+). Residues 554-613 (PRIEVMNIPVDKIREVIGSGGKVIREIVEKTGAKINIEDDGTVKIASSSGKEIEAARKWI) form the KH domain. The S1 motif domain maps to 623-691 (GQIYEGTVVK…ERGKVRLSMK (69 aa)).

It belongs to the polyribonucleotide nucleotidyltransferase family. Requires Mg(2+) as cofactor.

The protein localises to the cytoplasm. The catalysed reaction is RNA(n+1) + phosphate = RNA(n) + a ribonucleoside 5'-diphosphate. In terms of biological role, involved in mRNA degradation. Catalyzes the phosphorolysis of single-stranded polyribonucleotides processively in the 3'- to 5'-direction. This Rhizobium etli (strain ATCC 51251 / DSM 11541 / JCM 21823 / NBRC 15573 / CFN 42) protein is Polyribonucleotide nucleotidyltransferase.